The primary structure comprises 249 residues: Phosphate import ATP-binding protein PstB (249 aa).

The region spanning 4-244 (VKIKDLSLFY…PQDKRTEDYI (241 aa)) is the ABC transporter domain. 36 to 43 (GPSGCGKS) lines the ATP pocket.

It belongs to the ABC transporter superfamily. Phosphate importer (TC 3.A.1.7) family. As to quaternary structure, the complex is composed of two ATP-binding proteins (PstB), two transmembrane proteins (PstC and PstA) and a solute-binding protein (PstS).

It localises to the cell membrane. The catalysed reaction is phosphate(out) + ATP + H2O = ADP + 2 phosphate(in) + H(+). Functionally, part of the ABC transporter complex PstSACB involved in phosphate import. Responsible for energy coupling to the transport system. This is Phosphate import ATP-binding protein PstB from Clostridium tetani (strain Massachusetts / E88).